A 607-amino-acid polypeptide reads, in one-letter code: V-type proton ATPase catalytic subunit A (607 aa).

Position 251-258 (251-258 (GAFGCGKT)) interacts with ATP.

It belongs to the ATPase alpha/beta chains family. V-ATPase is a heteromultimeric enzyme composed of a peripheral catalytic V1 complex (components A to H) attached to an integral membrane V0 proton pore complex (components: a, c, c', c'', d, e, f and VOA1).

Its subcellular location is the vacuole membrane. The enzyme catalyses ATP + H2O + 4 H(+)(in) = ADP + phosphate + 5 H(+)(out). Catalytic subunit of the V1 complex of vacuolar(H+)-ATPase (V-ATPase), a multisubunit enzyme composed of a peripheral complex (V1) that hydrolyzes ATP and a membrane integral complex (V0) that translocates protons. V-ATPase is responsible for acidifying and maintaining the pH of intracellular compartments. This chain is V-type proton ATPase catalytic subunit A (VMA1), found in Encephalitozoon cuniculi (strain GB-M1) (Microsporidian parasite).